Reading from the N-terminus, the 365-residue chain is Caffeic acid 3-O-methyltransferase 1 (365 aa).

130 to 136 (MNQDKVL) is a substrate binding site. The interval 162–180 (AFEYHGTDPRFNKVFNKGM) is substrate binding. S-adenosyl-L-methionine contacts are provided by Gly-208, Asp-231, Asp-251, Met-252, and Lys-265. His-269 (proton acceptor) is an active-site residue.

Belongs to the class I-like SAM-binding methyltransferase superfamily. Cation-independent O-methyltransferase family. COMT subfamily. Homodimer. The N-terminus is blocked. As to expression, xylem.

It catalyses the reaction (E)-caffeate + S-adenosyl-L-methionine = (E)-ferulate + S-adenosyl-L-homocysteine + H(+). Its pathway is aromatic compound metabolism; phenylpropanoid biosynthesis. Functionally, catalyzes the conversion of caffeic acid to ferulic acid and of 5-hydroxyferulic acid to sinapic acid. The resulting products may subsequently be converted to the corresponding alcohols that are incorporated into lignins. This Populus tremuloides (Quaking aspen) protein is Caffeic acid 3-O-methyltransferase 1 (OMT1).